A 343-amino-acid chain; its full sequence is C5a anaphylatoxin chemotactic receptor 2 (343 aa).

Residues 1–44 are Extracellular-facing; the sequence is MLNDTTSKDYEYEYDQEQYSDLLNVPVDCPAGNCFSNDAYLIVL. N-linked (GlcNAc...) asparagine glycosylation occurs at Asn-3. A helical transmembrane segment spans residues 45–67; the sequence is LGLYSVIFLVGVPGNTLLAWVTW. Over 68–78 the chain is Cytoplasmic; sequence KESRHRLGASW. The helical transmembrane segment at 79-101 threads the bilayer; it reads FLHLTMADLLCCVSLPFLAVPIA. The Extracellular segment spans residues 102–120; it reads QKGHWPYGTAGCWLLSSIT. Cys-113 and Cys-192 form a disulfide bridge. A helical membrane pass occupies residues 121–143; the sequence is VLSMYASVLLLTGLSGDLFLLAF. Residues 144-155 are Cytoplasmic-facing; it reads RPSWKNADQRTC. The helical transmembrane segment at 156–178 threads the bilayer; the sequence is GVRVVQVSSWMLALLLTVPGAVY. Residues 179-208 are Extracellular-facing; sequence RKLLQEHYPPRLVCGTNYGGSVTAEVTITT. The chain crosses the membrane as a helical span at residues 209–231; sequence VRFLFGFLVPLVFMASCHGILQR. The Cytoplasmic portion of the chain corresponds to 232–243; it reads QMARRHWPLGTA. A helical transmembrane segment spans residues 244–266; that stretch reads VVVGFFICWTPFHLLRVIIAVAS. The Extracellular segment spans residues 267 to 280; that stretch reads SHSPLLAWALEAEP. The chain crosses the membrane as a helical span at residues 281-300; it reads LVTGLALAHSALNPIMFLYF. At 301–343 the chain is on the cytoplasmic side; it reads GRKQLCKSLQAACHWALRDLQDEEESAVTKVSTSQEMVSEMPV. Ser-326 is modified (phosphoserine).

It belongs to the G-protein coupled receptor 1 family. As to quaternary structure, interacts with C3 (the anaphylatoxin peptide C3a and the adipogenic hormone ASP); the interaction occurs with higher affinity for ASP, enhancing the phosphorylation and activation of GPR77, recruitment of ARRB2 to the cell surface and endocytosis of GRP77.

The protein resides in the cell membrane. Functionally, receptor for the chemotactic and inflammatory C3a, C4a and C5a anaphylatoxin peptides and also for their dearginated forms ASP/C3adesArg, C4adesArg and C5adesArg respectively. Couples weakly to G(i)-mediated signaling pathways. The protein is C5a anaphylatoxin chemotactic receptor 2 (C5ar2) of Rattus norvegicus (Rat).